The sequence spans 1132 residues: DNA-directed RNA polymerase subunit beta (1132 aa).

This sequence belongs to the RNA polymerase beta chain family. In terms of assembly, the RNAP catalytic core consists of 2 alpha, 1 beta, 1 beta' and 1 omega subunit. When a sigma factor is associated with the core the holoenzyme is formed, which can initiate transcription.

The catalysed reaction is RNA(n) + a ribonucleoside 5'-triphosphate = RNA(n+1) + diphosphate. DNA-dependent RNA polymerase catalyzes the transcription of DNA into RNA using the four ribonucleoside triphosphates as substrates. The chain is DNA-directed RNA polymerase subunit beta from Carboxydothermus hydrogenoformans (strain ATCC BAA-161 / DSM 6008 / Z-2901).